Reading from the N-terminus, the 326-residue chain is Aspartate carbamoyltransferase catalytic subunit (326 aa).

Residues R58 and T59 each contribute to the carbamoyl phosphate site. Residue K86 coordinates L-aspartate. The carbamoyl phosphate site is built by R108, H141, and Q144. L-aspartate is bound by residues R181 and R239. G280 and P281 together coordinate carbamoyl phosphate.

This sequence belongs to the aspartate/ornithine carbamoyltransferase superfamily. ATCase family. Heterododecamer (2C3:3R2) of six catalytic PyrB chains organized as two trimers (C3), and six regulatory PyrI chains organized as three dimers (R2).

It catalyses the reaction carbamoyl phosphate + L-aspartate = N-carbamoyl-L-aspartate + phosphate + H(+). Its pathway is pyrimidine metabolism; UMP biosynthesis via de novo pathway; (S)-dihydroorotate from bicarbonate: step 2/3. Functionally, catalyzes the condensation of carbamoyl phosphate and aspartate to form carbamoyl aspartate and inorganic phosphate, the committed step in the de novo pyrimidine nucleotide biosynthesis pathway. The polypeptide is Aspartate carbamoyltransferase catalytic subunit (Synechococcus sp. (strain JA-2-3B'a(2-13)) (Cyanobacteria bacterium Yellowstone B-Prime)).